Consider the following 124-residue polypeptide: UPF0344 protein OB1184 (124 aa).

The next 4 membrane-spanning stretches (helical) occupy residues 3–23 (HMHITSWALGLILFIIALVMY), 33–53 (IIHMILRLMFILIIITGGILT), 62–82 (MPILGEALVKALAGLWLVAMM), and 104–124 (IALVLVIVLGFFRLPMGFLFI).

This sequence belongs to the UPF0344 family.

The protein localises to the cell membrane. This chain is UPF0344 protein OB1184, found in Oceanobacillus iheyensis (strain DSM 14371 / CIP 107618 / JCM 11309 / KCTC 3954 / HTE831).